A 181-amino-acid chain; its full sequence is ATP-dependent protease subunit HslV (181 aa).

Thr-7 is an active-site residue. Positions 164, 167, and 170 each coordinate Na(+).

This sequence belongs to the peptidase T1B family. HslV subfamily. A double ring-shaped homohexamer of HslV is capped on each side by a ring-shaped HslU homohexamer. The assembly of the HslU/HslV complex is dependent on binding of ATP.

The protein resides in the cytoplasm. The catalysed reaction is ATP-dependent cleavage of peptide bonds with broad specificity.. With respect to regulation, allosterically activated by HslU binding. In terms of biological role, protease subunit of a proteasome-like degradation complex believed to be a general protein degrading machinery. The protein is ATP-dependent protease subunit HslV of Shouchella clausii (strain KSM-K16) (Alkalihalobacillus clausii).